The following is a 381-amino-acid chain: Cytochrome P450 105C1 (381 aa).

C330 serves as a coordination point for heme.

Belongs to the cytochrome P450 family. Heme serves as cofactor.

Its subcellular location is the cytoplasm. The protein is Cytochrome P450 105C1 (cyp105C1) of Streptomyces sp.